The chain runs to 418 residues: Mitochondrial outer membrane protein SLC25A46 (418 aa).

A disordered region spans residues methionine 1 to alanine 30. A Phosphoserine modification is found at serine 32. A disordered region spans residues threonine 44–serine 93. Threonine 45 is modified (phosphothreonine). The stretch at glutamine 96–proline 187 is one Solcar 1 repeat. 6 consecutive transmembrane segments (helical) span residues phenylalanine 103 to leucine 123, phenylalanine 167 to proline 187, histidine 202 to isoleucine 222, leucine 258 to isoleucine 278, phenylalanine 314 to leucine 334, and valine 382 to valine 402. The stretch at aspartate 311–leucine 413 is one Solcar 2 repeat.

Belongs to the mitochondrial carrier (TC 2.A.29) family. In terms of assembly, associates with the mitochondrial contact site and cristae organizing system (MICOS) complex. May associate with the endoplasmic reticulum membrane protein complex (EMC).

The protein localises to the mitochondrion outer membrane. Transmembrane protein of the mitochondrial outer membrane that controls mitochondrial organization. May regulate the assembly of the MICOS (mitochondrial contact site and cristae organizing system) complex which is essential to the biogenesis and dynamics of mitochondrial cristae, the inwards folds of the inner mitochondrial membrane. Through its interaction with the EMC (endoplasmic reticulum membrane protein complex), could regulate mitochondrial lipid homeostasis and thereby mitochondrial fission. The sequence is that of Mitochondrial outer membrane protein SLC25A46 from Homo sapiens (Human).